We begin with the raw amino-acid sequence, 162 residues long: uncharacterized protein (162 aa).

The disordered stretch occupies residues 1-23 (MAQLPLSPAPQRPETKTPGKPEA). Residues 13–23 (PETKTPGKPEA) are compositionally biased toward basic and acidic residues.

This is an uncharacterized protein from Rhodobacter capsulatus (Rhodopseudomonas capsulata).